The following is a 251-amino-acid chain: Ditrans,polycis-undecaprenyl-diphosphate synthase ((2E,6E)-farnesyl-diphosphate specific) (251 aa).

Aspartate 20 is an active-site residue. Residue aspartate 20 coordinates Mg(2+). Substrate-binding positions include 21-24 (GNGR), tryptophan 25, arginine 33, histidine 37, and 65-67 (SSE). Asparagine 68 acts as the Proton acceptor in catalysis. Substrate is bound by residues tryptophan 69, arginine 71, arginine 188, and 194–196 (RIS). Residue glutamate 207 coordinates Mg(2+).

It belongs to the UPP synthase family. As to quaternary structure, homodimer. It depends on Mg(2+) as a cofactor.

The enzyme catalyses 8 isopentenyl diphosphate + (2E,6E)-farnesyl diphosphate = di-trans,octa-cis-undecaprenyl diphosphate + 8 diphosphate. In terms of biological role, catalyzes the sequential condensation of isopentenyl diphosphate (IPP) with (2E,6E)-farnesyl diphosphate (E,E-FPP) to yield (2Z,6Z,10Z,14Z,18Z,22Z,26Z,30Z,34E,38E)-undecaprenyl diphosphate (di-trans,octa-cis-UPP). UPP is the precursor of glycosyl carrier lipid in the biosynthesis of bacterial cell wall polysaccharide components such as peptidoglycan and lipopolysaccharide. This is Ditrans,polycis-undecaprenyl-diphosphate synthase ((2E,6E)-farnesyl-diphosphate specific) from Vibrio vulnificus (strain CMCP6).